The chain runs to 461 residues: Phosphoglycerate kinase, chloroplastic (461 aa).

The N-terminal 60 residues, 1-60 (MALSMKMRANARVSGRRVAAVAPRVVPFSSASSSVLRSGFALRCLWTSAAWAALASVVEA), are a transit peptide targeting the chloroplast. (2R)-3-phosphoglycerate is bound by residues A82, D83, N85, R100, S122, H123, G125, R126, R182, H214, and R215. Position 260 (G260) interacts with ADP. G260 is a CDP binding site. The AMP site is built by K262 and K266. ATP is bound at residue K266. G284 is an ADP binding site. Residue G284 coordinates CDP. Residues G285 and G357 each contribute to the AMP site. ATP-binding residues include G285 and G357. CDP is bound by residues G382 and F387. Position 387 (F387) interacts with ADP. AMP is bound at residue E388. Residues E388, D419, and S420 each coordinate ATP. D419 serves as a coordination point for Mg(2+).

Belongs to the phosphoglycerate kinase family. As to quaternary structure, monomer. Requires Mg(2+) as cofactor.

The protein localises to the plastid. The protein resides in the chloroplast. The enzyme catalyses (2R)-3-phosphoglycerate + ATP = (2R)-3-phospho-glyceroyl phosphate + ADP. The protein operates within carbohydrate biosynthesis; Calvin cycle. This is Phosphoglycerate kinase, chloroplastic from Chlamydomonas reinhardtii (Chlamydomonas smithii).